Reading from the N-terminus, the 944-residue chain is Neutral alpha-glucosidase AB (944 aa).

Positions 1-32 (MAAVAAVAARRRRSWTGLVLACLGVCLGLTLA) are cleaved as a signal peptide. The cysteines at positions 41 and 47 are disulfide-linked. Ser52 carries the post-translational modification Phosphoserine. Asn97 is a glycosylation site (N-linked (GlcNAc...) asparagine). A disordered region spans residues 181–225 (QRAPRVSQGSKDPAEGDGAQPEEAPGDGDKPEEIQGKAEKDEPGA). Positions 207–225 (DGDKPEEIQGKAEKDEPGA) are enriched in basic and acidic residues. Substrate-binding residues include Asp283 and Asp429. Asp542 (nucleophile) is an active-site residue. A substrate-binding site is contributed by Arg602. Catalysis depends on Asp618, which acts as the Proton donor. Residues Cys633 and Cys644 are joined by a disulfide bond. A substrate-binding site is contributed by His676.

The protein belongs to the glycosyl hydrolase 31 family. As to quaternary structure, heterodimer of a catalytic alpha subunit (GANAB) and a beta subunit (PRKCSH). Binds glycosylated PTPRC. Contains sialylated polysaccharide chains.

The protein localises to the endoplasmic reticulum. It localises to the golgi apparatus. It is found in the melanosome. The catalysed reaction is N(4)-(alpha-D-Glc-(1-&gt;3)-alpha-D-Man-(1-&gt;2)-alpha-D-Man-(1-&gt;2)-alpha-D-Man-(1-&gt;3)-[alpha-D-Man-(1-&gt;2)-alpha-D-Man-(1-&gt;3)-[alpha-D-Man-(1-&gt;2)-alpha-D-Man-(1-&gt;6)]-alpha-D-Man-(1-&gt;6)]-beta-D-Man-(1-&gt;4)-beta-D-GlcNAc-(1-&gt;4)-beta-D-GlcNAc)-L-asparaginyl-[protein] + H2O = N(4)-(alpha-D-Man-(1-&gt;2)-alpha-D-Man-(1-&gt;2)-alpha-D-Man-(1-&gt;3)-[alpha-D-Man-(1-&gt;2)-alpha-D-Man-(1-&gt;3)-[alpha-D-Man-(1-&gt;2)-alpha-D-Man-(1-&gt;6)]-alpha-D-Man-(1-&gt;6)]-beta-D-Man-(1-&gt;4)-beta-D-GlcNAc-(1-&gt;4)-beta-D-GlcNAc)-L-asparaginyl-[protein] (N-glucan mannose isomer 9A1,2,3B1,2,3) + beta-D-glucose. It catalyses the reaction N(4)-(alpha-D-Glc-(1-&gt;3)-alpha-D-Glc-(1-&gt;3)-alpha-D-Man-(1-&gt;2)-alpha-D-Man-(1-&gt;2)-alpha-D-Man-(1-&gt;3)-[alpha-D-Man-(1-&gt;2)-alpha-D-Man-(1-&gt;3)-[alpha-D-Man-(1-&gt;2)-alpha-D-Man-(1-&gt;6)]-alpha-D-Man-(1-&gt;6)]-beta-D-Man-(1-&gt;4)-beta-D-GlcNAc-(1-&gt;4)-beta-D-GlcNAc)-L-asparaginyl-[protein] + H2O = N(4)-(alpha-D-Glc-(1-&gt;3)-alpha-D-Man-(1-&gt;2)-alpha-D-Man-(1-&gt;2)-alpha-D-Man-(1-&gt;3)-[alpha-D-Man-(1-&gt;2)-alpha-D-Man-(1-&gt;3)-[alpha-D-Man-(1-&gt;2)-alpha-D-Man-(1-&gt;6)]-alpha-D-Man-(1-&gt;6)]-beta-D-Man-(1-&gt;4)-beta-D-GlcNAc-(1-&gt;4)-beta-D-GlcNAc)-L-asparaginyl-[protein] + beta-D-glucose. Its pathway is glycan metabolism; N-glycan metabolism. Its function is as follows. Catalytic subunit of glucosidase II that cleaves sequentially the 2 innermost alpha-1,3-linked glucose residues from the Glc(2)Man(9)GlcNAc(2) oligosaccharide precursor of immature glycoproteins. Required for PKD1/Polycystin-1 and PKD2/Polycystin-2 maturation and localization to the cell surface and cilia. This is Neutral alpha-glucosidase AB (GANAB) from Sus scrofa (Pig).